Consider the following 537-residue polypeptide: RNA polymerase sigma-54 factor 2 (537 aa).

A disordered region spans residues 52–90 (ANDEASGGEAPAEAGQFSDSDGGHNDEPGGGPGEAFEPG). Over residues 55 to 66 (EASGGEAPAEAG) the composition is skewed to low complexity. The segment at residues 403–422 (NLKAVADAIQMHESTVSRVT) is a DNA-binding region (H-T-H motif). An RPON box motif is present at residues 492–500 (ARRTVAKYR). The disordered stretch occupies residues 507–537 (SSVQRRRDKQSALGNVLSTAMSDRSRNPEPA). The span at 518-528 (ALGNVLSTAMS) shows a compositional bias: polar residues.

This sequence belongs to the sigma-54 factor family.

Its function is as follows. Sigma factors are initiation factors that promote the attachment of RNA polymerase to specific initiation sites and are then released. This sigma factor is responsible for the expression of the nitrogen fixation genes. This chain is RNA polymerase sigma-54 factor 2 (rpoN2), found in Bradyrhizobium diazoefficiens (strain JCM 10833 / BCRC 13528 / IAM 13628 / NBRC 14792 / USDA 110).